Reading from the N-terminus, the 63-residue chain is U2-agatoxin-Ao1v (63 aa).

A signal peptide spans 1–14 (LLLISAMVGSMIAA). Positions 15–28 (VPEEESLQLSEDER) are excised as a propeptide. Disulfide bonds link Cys-31/Cys-47, Cys-38/Cys-52, and Cys-46/Cys-62.

It belongs to the neurotoxin 01 (U2-agtx) family. In terms of tissue distribution, expressed by the venom gland.

It localises to the secreted. Its function is as follows. Insect active toxin causing rapid but reversible paralysis in crickets. No activity shown in mammals. Does not show effect on mammalian voltage-gated calcium channels. This chain is U2-agatoxin-Ao1v, found in Agelena orientalis (Funnel-web spider).